The primary structure comprises 214 residues: Thiamine-phosphate synthase (214 aa).

4-amino-2-methyl-5-(diphosphooxymethyl)pyrimidine contacts are provided by residues 37-41 (QYREK) and asparagine 73. Aspartate 74 and aspartate 93 together coordinate Mg(2+). Residue serine 112 participates in 4-amino-2-methyl-5-(diphosphooxymethyl)pyrimidine binding. 139 to 141 (TIS) provides a ligand contact to 2-[(2R,5Z)-2-carboxy-4-methylthiazol-5(2H)-ylidene]ethyl phosphate. Residue lysine 142 coordinates 4-amino-2-methyl-5-(diphosphooxymethyl)pyrimidine. Residues glycine 171 and 191 to 192 (IS) each bind 2-[(2R,5Z)-2-carboxy-4-methylthiazol-5(2H)-ylidene]ethyl phosphate.

Belongs to the thiamine-phosphate synthase family. Mg(2+) serves as cofactor.

It catalyses the reaction 2-[(2R,5Z)-2-carboxy-4-methylthiazol-5(2H)-ylidene]ethyl phosphate + 4-amino-2-methyl-5-(diphosphooxymethyl)pyrimidine + 2 H(+) = thiamine phosphate + CO2 + diphosphate. It carries out the reaction 2-(2-carboxy-4-methylthiazol-5-yl)ethyl phosphate + 4-amino-2-methyl-5-(diphosphooxymethyl)pyrimidine + 2 H(+) = thiamine phosphate + CO2 + diphosphate. The enzyme catalyses 4-methyl-5-(2-phosphooxyethyl)-thiazole + 4-amino-2-methyl-5-(diphosphooxymethyl)pyrimidine + H(+) = thiamine phosphate + diphosphate. It functions in the pathway cofactor biosynthesis; thiamine diphosphate biosynthesis; thiamine phosphate from 4-amino-2-methyl-5-diphosphomethylpyrimidine and 4-methyl-5-(2-phosphoethyl)-thiazole: step 1/1. Its function is as follows. Condenses 4-methyl-5-(beta-hydroxyethyl)thiazole monophosphate (THZ-P) and 2-methyl-4-amino-5-hydroxymethyl pyrimidine pyrophosphate (HMP-PP) to form thiamine monophosphate (TMP). The polypeptide is Thiamine-phosphate synthase (Listeria monocytogenes serovar 1/2a (strain ATCC BAA-679 / EGD-e)).